Consider the following 341-residue polypeptide: Major histocompatibility complex class I-related protein 1 (341 aa).

The signal sequence occupies residues 1 to 18 (MMLLLPLLAVFLVKRSHT). Positions 19 to 105 (RTHSLRYFRL…RHLQRHYNHS (87 aa)) are alpha-1. The tract at residues 19–197 (RTHSLRYFRL…EYGRDTLERT (179 aa)) is antigen-binding cleft. The Extracellular segment spans residues 19–296 (RTHSLRYFRL…APRESGDILR (278 aa)). Residues tyrosine 25 and arginine 27 each coordinate 8-(9H-purin-6-yl)-2-oxa-8-azabicyclo[3.3.1]nona-3,6-diene-4,6-dicarbaldehyde. Residues arginine 27, serine 42, and lysine 61 each contribute to the 5-(2-oxoethylideneamino)-6-(D-ribitylamino)uracil site. Positions 27, 42, and 61 each coordinate 5-(2-oxopropylideneamino)-6-(D-ribitylamino)uracil. 7-hydroxy-6-methyl-8-(1-D-ribityl)lumazine is bound by residues arginine 27, serine 42, and lysine 61. 2 residues coordinate 8-(9H-purin-6-yl)-2-oxa-8-azabicyclo[3.3.1]nona-3,6-diene-4,6-dicarbaldehyde: lysine 61 and histidine 76. Lysine 61 serves as a coordination point for 2-amino-4-oxopteridine-6-carbaldehyde. Pyridoxal is bound at residue lysine 61. An N-linked (GlcNAc...) asparagine glycan is attached at asparagine 103. An alpha-2 region spans residues 106–197 (GLHTYQRMIG…EYGRDTLERT (92 aa)). Arginine 112 serves as a coordination point for 8-(9H-purin-6-yl)-2-oxa-8-azabicyclo[3.3.1]nona-3,6-diene-4,6-dicarbaldehyde. 5-(2-oxoethylideneamino)-6-(D-ribitylamino)uracil contacts are provided by arginine 112, tyrosine 170, and glutamine 171. 5-(2-oxopropylideneamino)-6-(D-ribitylamino)uracil is bound by residues arginine 112, tyrosine 170, and glutamine 171. The 7-hydroxy-6-methyl-8-(1-D-ribityl)lumazine site is built by arginine 112, tyrosine 170, and glutamine 171. Intrachain disulfides connect cysteine 116–cysteine 179 and cysteine 218–cysteine 274. Residues 198–289 (EHPVVRTTRK…GRQMVLEAPR (92 aa)) form an alpha-3 region. The Ig-like C1-type domain occupies 200–301 (PVVRTTRKET…GDILRVSTIS (102 aa)). The connecting peptide stretch occupies residues 290–296 (ESGDILR). The helical transmembrane segment at 297–317 (VSTISGTTILIIALAGVGVLI) threads the bilayer. Residues 318–341 (WRRSQELKEVMYQPTQVNEGSSPS) are Cytoplasmic-facing.

This sequence belongs to the MHC class I family. As to quaternary structure, heterotrimer that consists of MR1, B2M and metabolite antigen. Major classes of metabolite ligands presented by MR1 include riboflavin-related antigens, pyrimidines and ribityl lumazines, nucleobase adducts and folate derivatives. Forms reversible covalent Schiff base complexes with microbial pyrimidine-based metabolite, which serves as a molecular switch triggering complete folding, stable association with B2M and translocation of the ternary complex from endoplasmic reticulum to the plasma membrane. Alternatively, forms non-Schiff base complexes with ribityl lumazines. On antigen-presenting cells, the ternary complex interacts with TCR on MR1-restricted CD4- or CD8-positive T cell subsets. Interacts with TAPBP and TAPBPL chaperones in the endoplasmic reticulum. TAPBP associated or not with MHC class I peptide loading complex binds ligand-free MR1 or MR1-B2M complex, providing for stable MR1 pools ready for metabolite antigen processing. TAPBPL interacts with MR1 in a ligand-independent way; this interaction may stabilize MR1 pool and facilitate ligand loading and dissociation. Structurally, MR1-B2M heterodimer adopts a topology similar to classical MHC class I molecules, with alpha-1 and alpha-2 domains of MR1 forming the antigen-binding cleft composed of two alpha-helices resting on a floor of 7-stranded anti-parallel beta-pleated sheet. N-glycosylated. As to expression, highly expressed thymus. Expressed in liver, kidney, spleen, heart, brain, lung, skeletal muscle and testis.

The protein localises to the cell membrane. The protein resides in the endoplasmic reticulum membrane. It is found in the golgi apparatus membrane. It localises to the early endosome membrane. Its subcellular location is the late endosome membrane. Functionally, antigen-presenting molecule specialized in displaying microbial pyrimidine-based metabolites to alpha-beta T cell receptors (TCR) on innate-type mucosal-associated invariant T (MAIT) cells. In complex with B2M preferentially presents riboflavin-derived metabolites to semi-invariant TRAV1 TCRs on MAIT cells, guiding immune surveillance of the microbial metabolome at mucosal epithelial barriers. Signature pyrimidine-based microbial antigens are generated via non-enzymatic condensation of metabolite intermediates of the riboflavin pathway with by-products arising from other metabolic pathways such as glycolysis. Typical potent antigenic metabolites are 5-(2-oxoethylideneamino)-6-D-ribitylaminouracil (5-OE-RU) and 5-(2-oxopropylideneamino)-6-D-ribitylaminouracil (5-OP-RU), products of condensation of 5-amino-6-D-ribityaminouracil (5-A-RU) with glyoxal or methylglyoxal by-products, respectively. May present microbial antigens to various TRAV1-negative MAIT cell subsets, providing for unique recognition of diverse microbes, including pathogens that do not synthesize riboflavin. Upon antigen recognition, elicits rapid innate-type MAIT cell activation to eliminate pathogenic microbes by directly killing infected cells. During T cell development, drives thymic selection and post-thymic terminal differentiation of MAIT cells in a process dependent on commensal microflora. Acts as an immune sensor of cancer cell metabolome. May present a tumor-specific or -associated metabolite essential for cancer cell survival to a pan-cancer TCR on a non-MAIT CD8-positive T cell clone, triggering T cell-mediated killing of a wide range of cancer cell types. May present tumor-enriched pyridoxal and pyridoxal 5'-phosphate antigens, enabling preferential recognition of cancer cells. Presents nucleobase carbonyl adducts generated during oxidative stress. Captures M3Ade, a nucleobase adduct composed of one adenine modified by a malondialdehyde trimer, for recognition by MR1-restricted T cell clones expressing a polyclonal TCR repertoire. This is Major histocompatibility complex class I-related protein 1 from Mus musculus (Mouse).